A 72-amino-acid polypeptide reads, in one-letter code: Crustacean hyperglycemic hormone (72 aa).

Residue Gln-1 is modified to Pyrrolidone carboxylic acid. A D-phenylalanine; in form CHH-II modification is found at Phe-3. 3 disulfides stabilise this stretch: Cys-7–Cys-43, Cys-23–Cys-39, and Cys-26–Cys-52. A Valine amide modification is found at Val-72.

In terms of processing, stereoinversion of L-Phe (in CHH-I) to D-Phe (in CHH-II) the two forms are present in a ratio 3:1 (CHH-I/CHH-II). In terms of tissue distribution, produced by the medulla terminalis X-organ in the eyestalks and transported to the sinus gland where they are stored and released.

Its subcellular location is the secreted. Its function is as follows. Hormone found in the sinus gland of isopods and decapods which controls the blood sugar level. Has a secretagogue action over the amylase released from the midgut gland. May act as a stress hormone and may be involved in the control of molting and reproduction. This is Crustacean hyperglycemic hormone from Procambarus bouvieri (Mexican crayfish).